A 274-amino-acid polypeptide reads, in one-letter code: tRNA-cytidine(32) 2-sulfurtransferase (274 aa).

The PP-loop motif signature appears at 40-45; sequence SGGKDS. Residues C115, C118, and C206 each coordinate [4Fe-4S] cluster.

This sequence belongs to the TtcA family. As to quaternary structure, homodimer. It depends on Mg(2+) as a cofactor. The cofactor is [4Fe-4S] cluster.

The protein localises to the cytoplasm. It carries out the reaction cytidine(32) in tRNA + S-sulfanyl-L-cysteinyl-[cysteine desulfurase] + AH2 + ATP = 2-thiocytidine(32) in tRNA + L-cysteinyl-[cysteine desulfurase] + A + AMP + diphosphate + H(+). It functions in the pathway tRNA modification. Catalyzes the ATP-dependent 2-thiolation of cytidine in position 32 of tRNA, to form 2-thiocytidine (s(2)C32). The sulfur atoms are provided by the cysteine/cysteine desulfurase (IscS) system. This chain is tRNA-cytidine(32) 2-sulfurtransferase, found in Pseudomonas putida (strain W619).